The chain runs to 650 residues: Acetyl-coenzyme A synthetase (650 aa).

CoA is bound by residues 191-194 (RGGR), Thr311, and Asn335. ATP-binding positions include 387–389 (GEP), 411–416 (DTWWQT), Asp501, and Arg516. Ser524 contacts CoA. Arg527 provides a ligand contact to ATP. The Mg(2+) site is built by Val538, His540, and Ile543. Arg585 is a CoA binding site. Lys610 is subject to N6-acetyllysine.

Belongs to the ATP-dependent AMP-binding enzyme family. The cofactor is Mg(2+). In terms of processing, acetylated. Deacetylation by the SIR2-homolog deacetylase activates the enzyme.

The enzyme catalyses acetate + ATP + CoA = acetyl-CoA + AMP + diphosphate. Catalyzes the conversion of acetate into acetyl-CoA (AcCoA), an essential intermediate at the junction of anabolic and catabolic pathways. AcsA undergoes a two-step reaction. In the first half reaction, AcsA combines acetate with ATP to form acetyl-adenylate (AcAMP) intermediate. In the second half reaction, it can then transfer the acetyl group from AcAMP to the sulfhydryl group of CoA, forming the product AcCoA. The protein is Acetyl-coenzyme A synthetase of Vibrio vulnificus (strain CMCP6).